Reading from the N-terminus, the 411-residue chain is Kelch domain-containing protein 10 (411 aa).

6 Kelch repeats span residues 72–133, 135–186, 187–239, 240–288, 296–342, and 345–388; these read NLYV…LHGH, LLVF…IIHG, FLYV…HDGQ, RIYV…RRCH, EVFI…AVTP, and CMYI…YFPH.

This sequence belongs to the KLHDC10 family. As to quaternary structure, component of a CRL2 E3 ubiquitin-protein ligase complex, also named ECS (Elongin BC-CUL2/5-SOCS-box protein) complex, composed of CUL2, Elongin BC (ELOB and ELOC), RBX1 and substrate-specific adapter KLHDC10.

It functions in the pathway protein modification; protein ubiquitination. Its function is as follows. Substrate-recognition component of a Cul2-RING (CRL2) E3 ubiquitin-protein ligase complex of the DesCEND (destruction via C-end degrons) pathway, which recognizes a C-degron located at the extreme C terminus of target proteins, leading to their ubiquitination and degradation. The C-degron recognized by the DesCEND pathway is usually a motif of less than ten residues and can be present in full-length proteins, truncated proteins or proteolytically cleaved forms. The CRL2(KLHDC10) complex specifically recognizes proteins with a proline-glycine (Pro-Gly) or an alanine tail (CAT tail) at the C-terminus, leading to their ubiquitination and degradation. The CRL2(KLHDC10) complex is involved in the ribosome-associated quality control (RQC) pathway, which mediates the extraction of incompletely synthesized nascent chains from stalled ribosomes: CRL2(KLHDC10) acts downstream of NEMF and recognizes CAT tails associated with stalled nascent chains, leading to their ubiquitination and degradation. This Xenopus tropicalis (Western clawed frog) protein is Kelch domain-containing protein 10.